A 481-amino-acid polypeptide reads, in one-letter code: Surface lipoprotein assembly modifier 1 (481 aa).

Positions 1-23 (MSIQTKFILFLSSSLFLTPYSVA) are cleaved as a signal peptide. The segment at 25 to 192 (EKSPQPHDGR…QYLSALNQRD (168 aa)) is N-terminal domain. The segment at 193-481 (QWKIQGGFSF…RIYVEISKTF (289 aa)) is C-terminal probable beta barrel. Beta stranded transmembrane passes span 194–204 (WKIQGGFSFLN), 233–243 (SYFGNAEKKWS), 248–258 (HFTKLSLEGSG), 271–281 (NARAGVGLGYQ), 285–295 (FELSLMPFTEK), 315–325 (SGARLDLSNWL), 329–338 (WQISTALEYG), 353–363 (YLASATLLYLA), 368–377 (YWFGGADYNR), 390–400 (KNVRLGWGQEW), 405–414 (STRLILNYAR), 432–441 (YASVLTIWHR), 448–458 (ITPKLSWSYQK), and 471–481 (NRIYVEISKTF).

It belongs to the Slam family.

It is found in the cell outer membrane. Functionally, required for correct export to the cell surface of some cell outer membrane lipoproteins. This Haemophilus influenzae (strain ATCC 51907 / DSM 11121 / KW20 / Rd) protein is Surface lipoprotein assembly modifier 1.